The sequence spans 129 residues: MAKEATRVRRRERKNIASGVAHVNSSFNNTTITITDAQGNTIAWSSAGTMGFKGSRKSTPYAAQVAAEDVSKKAQEHGMRTLEVEVAGPGSGRESALRALQAAGFTVTSIRDVTTIPHNGCRPRKRRRV.

This sequence belongs to the universal ribosomal protein uS11 family. As to quaternary structure, part of the 30S ribosomal subunit. Interacts with proteins S7 and S18. Binds to IF-3.

Located on the platform of the 30S subunit, it bridges several disparate RNA helices of the 16S rRNA. Forms part of the Shine-Dalgarno cleft in the 70S ribosome. The polypeptide is Small ribosomal subunit protein uS11 (Bradyrhizobium sp. (strain BTAi1 / ATCC BAA-1182)).